The following is a 152-amino-acid chain: Cytochrome c oxidase subunit 5A, mitochondrial (152 aa).

Residues 1-43 constitute a mitochondrion transit peptide; it reads MLGTALRRCAVAAAAASRAGPRGLLHPAPAPGPAAAIQSIRCY. Residues 2–22 carry the SIFI-degron motif; it reads LGTALRRCAVAAAAASRAGPR. Residues Lys-89 and Lys-115 each carry the N6-acetyllysine modification. Thr-143 is modified (phosphothreonine).

This sequence belongs to the cytochrome c oxidase subunit 5A family. As to quaternary structure, component of the cytochrome c oxidase (complex IV, CIV), a multisubunit enzyme composed of 14 subunits. The complex is composed of a catalytic core of 3 subunits MT-CO1, MT-CO2 and MT-CO3, encoded in the mitochondrial DNA, and 11 supernumerary subunits COX4I, COX5A, COX5B, COX6A, COX6B, COX6C, COX7A, COX7B, COX7C, COX8 and NDUFA4, which are encoded in the nuclear genome. The complex exists as a monomer or a dimer and forms supercomplexes (SCs) in the inner mitochondrial membrane with NADH-ubiquinone oxidoreductase (complex I, CI) and ubiquinol-cytochrome c oxidoreductase (cytochrome b-c1 complex, complex III, CIII), resulting in different assemblies (supercomplex SCI(1)III(2)IV(1) and megacomplex MCI(2)III(2)IV(2)). Interacts with AFG1L. Interacts with RAB5IF. In terms of processing, in response to mitochondrial stress, the precursor protein is ubiquitinated by the SIFI complex in the cytoplasm before mitochondrial import, leading to its degradation. Within the SIFI complex, UBR4 initiates ubiquitin chain that are further elongated or branched by KCMF1.

Its subcellular location is the mitochondrion inner membrane. The protein operates within energy metabolism; oxidative phosphorylation. Its function is as follows. Component of the cytochrome c oxidase, the last enzyme in the mitochondrial electron transport chain which drives oxidative phosphorylation. The respiratory chain contains 3 multisubunit complexes succinate dehydrogenase (complex II, CII), ubiquinol-cytochrome c oxidoreductase (cytochrome b-c1 complex, complex III, CIII) and cytochrome c oxidase (complex IV, CIV), that cooperate to transfer electrons derived from NADH and succinate to molecular oxygen, creating an electrochemical gradient over the inner membrane that drives transmembrane transport and the ATP synthase. Cytochrome c oxidase is the component of the respiratory chain that catalyzes the reduction of oxygen to water. Electrons originating from reduced cytochrome c in the intermembrane space (IMS) are transferred via the dinuclear copper A center (CU(A)) of subunit 2 and heme A of subunit 1 to the active site in subunit 1, a binuclear center (BNC) formed by heme A3 and copper B (CU(B)). The BNC reduces molecular oxygen to 2 water molecules using 4 electrons from cytochrome c in the IMS and 4 protons from the mitochondrial matrix. This Eulemur fulvus fulvus (Brown lemur) protein is Cytochrome c oxidase subunit 5A, mitochondrial (COX5A).